The sequence spans 444 residues: MVAIKDITARQILDSRGNPTVEVDLLTDGGCFRAAVPSGASTGIYEALELRDKDQTKFMGKGVMKAVENIHKIIKPALIGKDPCDQKGIDKLMVEELDGTKNEWGWCKSKLGANAILAVSMACCRAGAAAKGMPLYKYIATLAGNPTDKMVMPVPFFNVINGGSHAGNKVAMQEFMIAPVGASTIQEAIQIGAEVYQHLKVVIKKKYGLDATNVGDEGGFAPNISGATEALDLLMEAIKVSGHEGKVKIAADVAASEFFLQDDKVYDLDFKTPNNDKSQRKTGEELRNLYKDLCQKYPFVSIEDPFDQDDFHSYAQLTNEVGEKVQIVGDDLLVTNPTRIEKAVQEKACNGLLLKVNQIGTVSESIEACQLAQKNKWGVMVSHRSGETEDSFIADLVVGLRTGQIKTGAPCRSERLCKYNQLMRIEESLGSDCQYAGAGFRHPN.

Residues H165 and E174 each contribute to the substrate site. Catalysis depends on E217, which acts as the Proton donor. Residues D252, E303, and D330 each contribute to the Mg(2+) site. Substrate is bound by residues E303 and D330. K355 acts as the Proton acceptor in catalysis. Residues 382-385 (SHRS) and K406 each bind substrate.

Belongs to the enolase family. In terms of assembly, homodimer. The cofactor is Mg(2+).

Its subcellular location is the cytoplasm. It carries out the reaction (2R)-2-phosphoglycerate = phosphoenolpyruvate + H2O. Its pathway is carbohydrate degradation; glycolysis; pyruvate from D-glyceraldehyde 3-phosphate: step 4/5. This chain is Enolase 2 (ENO2), found in Toxoplasma gondii.